A 112-amino-acid chain; its full sequence is Small ribosomal subunit protein uS11c (112 aa).

Belongs to the universal ribosomal protein uS11 family. In terms of assembly, part of the 30S ribosomal subunit.

It is found in the plastid. This is Small ribosomal subunit protein uS11c from Euglena longa (Euglenophycean alga).